The primary structure comprises 761 residues: Neurotrypsin (761 aa).

Residues 1–21 form the signal peptide; sequence MALARCVLAVILGALSVVARA. Positions 25 to 87 are disordered; that stretch reads SRSPLHRPHP…PPTIPRRCGA (63 aa). The span at 38 to 48 shows a compositional bias: low complexity; the sequence is RSQHAHYLPSS. The Kringle domain occupies 85-157; sequence CGAGESWGNA…GKVDWGYCDC (73 aa). 17 cysteine pairs are disulfide-bonded: cysteine 85/cysteine 157, cysteine 101/cysteine 141, cysteine 130/cysteine 155, cysteine 191/cysteine 255, cysteine 204/cysteine 265, cysteine 235/cysteine 245, cysteine 298/cysteine 361, cysteine 311/cysteine 371, cysteine 341/cysteine 351, cysteine 411/cysteine 475, cysteine 424/cysteine 485, cysteine 455/cysteine 465, cysteine 505/cysteine 636, cysteine 547/cysteine 563, cysteine 651/cysteine 717, cysteine 680/cysteine 694, and cysteine 707/cysteine 736. Asparagine 93 is a glycosylation site (N-linked (GlcNAc...) asparagine). SRCR domains are found at residues 166–267, 273–373, and 386–487; these read IRLV…SCVP, IRLA…TCYP, and IRLV…ICDY. The zymogen activation region stretch occupies residues 505–516; it reads CGLRLLHRRQKR. Residues 517 to 760 enclose the Peptidase S1 domain; it reads IIGGNNSLRG…FVPWIKSVTS (244 aa). An N-linked (GlcNAc...) asparagine glycan is attached at asparagine 521. Residue histidine 562 is the Charge relay system of the active site. N-linked (GlcNAc...) asparagine glycosylation occurs at asparagine 569. Aspartate 612 (charge relay system) is an active-site residue. Catalysis depends on serine 711, which acts as the Charge relay system.

This sequence belongs to the peptidase S1 family. Most abundant in cerebral cortex, hippocampus and amygdala.

Its subcellular location is the secreted. Plays a role in neuronal plasticity and the proteolytic action may subserve structural reorganizations associated with learning and memory operations. In Mus musculus (Mouse), this protein is Neurotrypsin (Prss12).